Here is a 569-residue protein sequence, read N- to C-terminus: Proline--tRNA ligase (569 aa).

The protein belongs to the class-II aminoacyl-tRNA synthetase family. ProS type 1 subfamily. In terms of assembly, homodimer.

It localises to the cytoplasm. The enzyme catalyses tRNA(Pro) + L-proline + ATP = L-prolyl-tRNA(Pro) + AMP + diphosphate. Functionally, catalyzes the attachment of proline to tRNA(Pro) in a two-step reaction: proline is first activated by ATP to form Pro-AMP and then transferred to the acceptor end of tRNA(Pro). As ProRS can inadvertently accommodate and process non-cognate amino acids such as alanine and cysteine, to avoid such errors it has two additional distinct editing activities against alanine. One activity is designated as 'pretransfer' editing and involves the tRNA(Pro)-independent hydrolysis of activated Ala-AMP. The other activity is designated 'posttransfer' editing and involves deacylation of mischarged Ala-tRNA(Pro). The misacylated Cys-tRNA(Pro) is not edited by ProRS. In Legionella pneumophila (strain Corby), this protein is Proline--tRNA ligase.